Consider the following 75-residue polypeptide: Protein B (75 aa).

The chain is Protein B from Dicentrarchus labrax (European seabass).